The following is a 443-amino-acid chain: Differentially expressed in FDCP 8 homolog A (443 aa).

The segment at 1 to 49 is disordered; the sequence is MEYDDKLVRFRQGHLNPFDKQGGAERHPADSEAQPPKDSSTISPHSIPE. 2 consecutive Phorbol-ester/DAG-type zinc fingers follow at residues 134 to 185 and 364 to 424; these read EHRF…TKPC and IHTT…STSC.

It belongs to the DEF8 family.

Functionally, positively regulates lysosome peripheral distribution and ruffled border formation in osteoclasts. Involved in bone resorption. This chain is Differentially expressed in FDCP 8 homolog A (def8-a), found in Xenopus laevis (African clawed frog).